The primary structure comprises 95 residues: UPF0235 protein Adeh_1087 (95 aa).

The protein belongs to the UPF0235 family.

This is UPF0235 protein Adeh_1087 from Anaeromyxobacter dehalogenans (strain 2CP-C).